A 271-amino-acid polypeptide reads, in one-letter code: NH(3)-dependent NAD(+) synthetase (271 aa).

43–50 (GISGGQDS) serves as a coordination point for ATP. Aspartate 49 serves as a coordination point for Mg(2+). Residue arginine 137 participates in deamido-NAD(+) binding. An ATP-binding site is contributed by threonine 157. Position 162 (glutamate 162) interacts with Mg(2+). Positions 170 and 177 each coordinate deamido-NAD(+). Positions 186 and 208 each coordinate ATP. Residue 257 to 258 (HK) coordinates deamido-NAD(+).

It belongs to the NAD synthetase family. In terms of assembly, homodimer.

The enzyme catalyses deamido-NAD(+) + NH4(+) + ATP = AMP + diphosphate + NAD(+) + H(+). The protein operates within cofactor biosynthesis; NAD(+) biosynthesis; NAD(+) from deamido-NAD(+) (ammonia route): step 1/1. Its function is as follows. Catalyzes the ATP-dependent amidation of deamido-NAD to form NAD. Uses ammonia as a nitrogen source. The sequence is that of NH(3)-dependent NAD(+) synthetase from Exiguobacterium sibiricum (strain DSM 17290 / CCUG 55495 / CIP 109462 / JCM 13490 / 255-15).